The chain runs to 122 residues: Small ribosomal subunit protein uS13 (122 aa).

Positions 99–122 are disordered; the sequence is RGQRTHTNARTRKGPAKAIAGKKK.

It belongs to the universal ribosomal protein uS13 family. In terms of assembly, part of the 30S ribosomal subunit. Forms a loose heterodimer with protein S19. Forms two bridges to the 50S subunit in the 70S ribosome.

In terms of biological role, located at the top of the head of the 30S subunit, it contacts several helices of the 16S rRNA. In the 70S ribosome it contacts the 23S rRNA (bridge B1a) and protein L5 of the 50S subunit (bridge B1b), connecting the 2 subunits; these bridges are implicated in subunit movement. Contacts the tRNAs in the A and P-sites. The chain is Small ribosomal subunit protein uS13 from Rhizobium meliloti (strain 1021) (Ensifer meliloti).